We begin with the raw amino-acid sequence, 1025 residues long: Dihydropyrimidine dehydrogenase [NADP(+)] (1025 aa).

The propeptide occupies methionine 1–proline 3. The 4Fe-4S ferredoxin-type 1 domain occupies glutamate 69–phenylalanine 100. Positions 79, 82, 87, and 91 each coordinate [4Fe-4S] cluster. Valine 129 serves as a coordination point for FAD. Positions 130, 136, 140, and 156 each coordinate [4Fe-4S] cluster. Residues glycine 194–alanine 198, glutamate 218–leucine 226, arginine 235, and leucine 261 contribute to the FAD site. NADP(+) contacts are provided by residues alanine 340–threonine 343, arginine 364–lysine 365, and arginine 371. Residue lysine 384 is modified to N6-acetyllysine. NADP(+) is bound by residues alanine 437–glycine 439 and aspartate 481–asparagine 487. Glycine 480 to threonine 489 lines the FAD pocket. Residues serine 550 and lysine 574–threonine 575 contribute to the FMN site. Substrate is bound by residues asparagine 609 and asparagine 668–serine 670. The active-site Proton acceptor is the cysteine 671. Lysine 709 serves as a coordination point for FMN. A substrate-binding site is contributed by asparagine 736 to threonine 737. FMN contacts are provided by residues glycine 767, threonine 793–glycine 795, and cysteine 816–serine 817. 2 4Fe-4S ferredoxin-type domains span residues valine 944 to glutamate 976 and histidine 978 to arginine 1007. Residues cysteine 953, cysteine 956, cysteine 959, cysteine 963, cysteine 986, cysteine 989, cysteine 992, and cysteine 996 each coordinate [4Fe-4S] cluster.

It belongs to the dihydropyrimidine dehydrogenase family. Homodimer. FAD serves as cofactor. Requires FMN as cofactor. The cofactor is [4Fe-4S] cluster.

The protein localises to the cytoplasm. It catalyses the reaction 5,6-dihydrouracil + NADP(+) = uracil + NADPH + H(+). It carries out the reaction 5,6-dihydrothymine + NADP(+) = thymine + NADPH + H(+). It functions in the pathway amino-acid biosynthesis; beta-alanine biosynthesis. Its activity is regulated as follows. Inactivated by 5-iodouracil. Involved in pyrimidine base degradation. Catalyzes the reduction of uracil and thymine. This chain is Dihydropyrimidine dehydrogenase [NADP(+)] (DPYD), found in Sus scrofa (Pig).